Here is a 235-residue protein sequence, read N- to C-terminus: MKFLLRLLSKLLCRIKLFSNRLYYIGGNDALPPPLSKDEEDDLVNKLVNGDESIRSILIERNLRLVVYIARKFENTGVGVEDLISVGTIGLIKAVNTFDPTKKIKLATYGSRCIENEILMYLRRNSKVKAEISFYEPLNIDWDGNKLLLSDILGTDNDCVYNLIEGEVDKQLLLFALKKLNEREKRIVELRYGLTGVGEKTQKEVADMLGISQSYISRLEKRIIKRLKKEINKML.

The Polymerase core binding motif lies at 82–95 (DLISVGTIGLIKAV). Positions 202–221 (QKEVADMLGISQSYISRLEK) form a DNA-binding region, H-T-H motif.

It belongs to the sigma-70 factor family.

In terms of biological role, sigma factors are initiation factors that promote the attachment of RNA polymerase to specific initiation sites and are then released. This sigma factor is responsible for the expression of sporulation specific genes. This is RNA polymerase sigma-E factor (sigE) from Clostridium acetobutylicum (strain ATCC 824 / DSM 792 / JCM 1419 / IAM 19013 / LMG 5710 / NBRC 13948 / NRRL B-527 / VKM B-1787 / 2291 / W).